We begin with the raw amino-acid sequence, 660 residues long: DNA mismatch repair protein MutL (660 aa).

It belongs to the DNA mismatch repair MutL/HexB family.

Its function is as follows. This protein is involved in the repair of mismatches in DNA. It is required for dam-dependent methyl-directed DNA mismatch repair. May act as a 'molecular matchmaker', a protein that promotes the formation of a stable complex between two or more DNA-binding proteins in an ATP-dependent manner without itself being part of a final effector complex. The protein is DNA mismatch repair protein MutL of Streptococcus pyogenes serotype M3 (strain ATCC BAA-595 / MGAS315).